The sequence spans 22 residues: C-type natriuretic peptide (22 aa).

Cysteine 6 and cysteine 22 form a disulfide bridge.

The protein belongs to the natriuretic peptide family.

The protein resides in the secreted. Hormone which plays a role in endochondral ossification through regulation of cartilaginous growth plate chondrocytes proliferation and differentiation. May also be vasoactive and natriuretic. Specifically binds and stimulates the cGMP production of the NPR2 receptor. Binds the clearance receptor NPR3. The protein is C-type natriuretic peptide (NPPC) of Gallus gallus (Chicken).